Consider the following 227-residue polypeptide: 2-C-methyl-D-erythritol 4-phosphate cytidylyltransferase (227 aa).

Belongs to the IspD/TarI cytidylyltransferase family. IspD subfamily.

It catalyses the reaction 2-C-methyl-D-erythritol 4-phosphate + CTP + H(+) = 4-CDP-2-C-methyl-D-erythritol + diphosphate. Its pathway is isoprenoid biosynthesis; isopentenyl diphosphate biosynthesis via DXP pathway; isopentenyl diphosphate from 1-deoxy-D-xylulose 5-phosphate: step 2/6. Functionally, catalyzes the formation of 4-diphosphocytidyl-2-C-methyl-D-erythritol from CTP and 2-C-methyl-D-erythritol 4-phosphate (MEP). The polypeptide is 2-C-methyl-D-erythritol 4-phosphate cytidylyltransferase (Thermosipho melanesiensis (strain DSM 12029 / CIP 104789 / BI429)).